Reading from the N-terminus, the 978-residue chain is Translation initiation factor IF-2 (978 aa).

Disordered stretches follow at residues 107–129 (AEAPALETEQEVEAAPQVDNLEL) and 146–387 (QEEE…HRVQ). A compositionally biased stretch (basic and acidic residues) spans 146–169 (QEEELSERRRQREEQEARSREASE). Residues 170-186 (KAAAVAAEAAEAAAAQA) show a composition bias toward low complexity. Basic and acidic residues predominate over residues 215-259 (AEKEQHLAKEKGLAREKELAESKARAAEDVVRAADLGDRRRKAES). Composition is skewed to low complexity over residues 295-326 (KPAAGAVPAKPAKPGAPGAPGAPAAGAAAGAG) and 349-361 (PTRGATAAPGAGR). Residues 375-386 (GSSDRDRDDHRV) show a composition bias toward basic and acidic residues. The region spanning 478–647 (PRAPVVTVMG…LLQAEVLELK (170 aa)) is the tr-type G domain. The interval 487–494 (GHVDHGKT) is G1. Residue 487 to 494 (GHVDHGKT) participates in GTP binding. Residues 512–516 (GITQH) form a G2 region. Residues 533 to 536 (DTPG) form a G3 region. Residues 533–537 (DTPGH) and 587–590 (NKID) contribute to the GTP site. The G4 stretch occupies residues 587–590 (NKID). The G5 stretch occupies residues 623–625 (SAK).

The protein belongs to the TRAFAC class translation factor GTPase superfamily. Classic translation factor GTPase family. IF-2 subfamily.

Its subcellular location is the cytoplasm. One of the essential components for the initiation of protein synthesis. Protects formylmethionyl-tRNA from spontaneous hydrolysis and promotes its binding to the 30S ribosomal subunits. Also involved in the hydrolysis of GTP during the formation of the 70S ribosomal complex. This chain is Translation initiation factor IF-2, found in Albidiferax ferrireducens (strain ATCC BAA-621 / DSM 15236 / T118) (Rhodoferax ferrireducens).